The chain runs to 253 residues: Trypsin delta (253 aa).

The N-terminal stretch at Met-1–Gly-22 is a signal peptide. A propeptide spans Leu-23–Arg-30 (activation peptide). Residues Ile-31 to Ala-253 enclose the Peptidase S1 domain. Cys-56 and Cys-72 are oxidised to a cystine. Residues His-71 and Asp-116 each act as charge relay system in the active site. Intrachain disulfides connect Cys-180–Cys-197 and Cys-206–Cys-230. The active-site Charge relay system is Ser-210.

The protein belongs to the peptidase S1 family.

It localises to the secreted. The protein localises to the extracellular space. It catalyses the reaction Preferential cleavage: Arg-|-Xaa, Lys-|-Xaa.. The sequence is that of Trypsin delta from Drosophila erecta (Fruit fly).